The following is an 890-amino-acid chain: Alanine--tRNA ligase (890 aa).

Positions 564, 568, 677, and 681 each coordinate Zn(2+).

This sequence belongs to the class-II aminoacyl-tRNA synthetase family. The cofactor is Zn(2+).

The protein localises to the cytoplasm. It catalyses the reaction tRNA(Ala) + L-alanine + ATP = L-alanyl-tRNA(Ala) + AMP + diphosphate. Its function is as follows. Catalyzes the attachment of alanine to tRNA(Ala) in a two-step reaction: alanine is first activated by ATP to form Ala-AMP and then transferred to the acceptor end of tRNA(Ala). Also edits incorrectly charged Ser-tRNA(Ala) and Gly-tRNA(Ala) via its editing domain. This chain is Alanine--tRNA ligase, found in Rhodopseudomonas palustris (strain BisB18).